The chain runs to 412 residues: Peptidase T (412 aa).

H81 serves as a coordination point for Zn(2+). D83 is an active-site residue. Zn(2+) is bound at residue D144. E178 acts as the Proton acceptor in catalysis. Zn(2+)-binding residues include E179, D201, and H383.

The protein belongs to the peptidase M20B family. Requires Zn(2+) as cofactor.

Its subcellular location is the cytoplasm. The enzyme catalyses Release of the N-terminal residue from a tripeptide.. Cleaves the N-terminal amino acid of tripeptides. In Bacillus cereus (strain Q1), this protein is Peptidase T.